The chain runs to 314 residues: Dioxygenase easH (314 aa).

Fe cation contacts are provided by His141, Asp143, and His217.

This sequence belongs to the PhyH family. In terms of assembly, homodimer. The cofactor is Fe cation.

The protein operates within alkaloid biosynthesis; ergot alkaloid biosynthesis. Functionally, dioxygenase; part of the gene cluster that mediates the biosynthesis of fungal ergot alkaloid. DmaW catalyzes the first step of ergot alkaloid biosynthesis by condensing dimethylallyl diphosphate (DMAP) and tryptophan to form 4-dimethylallyl-L-tryptophan. The second step is catalyzed by the methyltransferase easF that methylates 4-dimethylallyl-L-tryptophan in the presence of S-adenosyl-L-methionine, resulting in the formation of 4-dimethylallyl-L-abrine. The catalase easC and the FAD-dependent oxidoreductase easE then transform 4-dimethylallyl-L-abrine to chanoclavine-I which is further oxidized by easD in the presence of NAD(+), resulting in the formation of chanoclavine-I aldehyde. Agroclavine dehydrogenase easG then mediates the conversion of chanoclavine-I aldehyde to agroclavine via a non-enzymatic adduct reaction: the substrate is an iminium intermediate that is formed spontaneously from chanoclavine-I aldehyde in the presence of glutathione. The presence of easA is not required to complete this reaction. Further conversion of agroclavine to paspalic acid is a two-step process involving oxidation of agroclavine to elymoclavine and of elymoclavine to paspalic acid, the second step being performed by the elymoclavine oxidase cloA. Paspalic acid is then further converted to D-lysergic acid. Ergopeptines are assembled from D-lysergic acid and three different amino acids by the D-lysergyl-peptide-synthetases composed each of a monomudular and a trimodular nonribosomal peptide synthetase subunit. LpsB and lpsC encode the monomodular subunits responsible for D-lysergic acid activation and incorporation into the ergopeptine backbone. LpsA1 and A2 subunits encode the trimodular nonribosomal peptide synthetase assembling the tripeptide portion of ergopeptines. LpsA1 is responsible for formation of the major ergopeptine, ergotamine, and lpsA2 for alpha-ergocryptine, the minor ergopeptine of the total alkaloid mixture elaborated by C.purpurea. D-lysergyl-tripeptides are assembled by the nonribosomal peptide synthetases and released as N-(D-lysergyl-aminoacyl)-lactams. Cyclolization of the D-lysergyl-tripeptides is performed by the Fe(2+)/2-ketoglutarate-dependent dioxygenase easH which introduces a hydroxyl group into N-(D-lysergyl-aminoacyl)-lactam at alpha-C of the aminoacyl residue followed by spontaneous condensation with the terminal lactam carbonyl group. In Claviceps purpurea (strain 20.1) (Ergot fungus), this protein is Dioxygenase easH.